The primary structure comprises 234 residues: Probable chemoreceptor glutamine deamidase CheD (234 aa).

The protein belongs to the CheD family.

The enzyme catalyses L-glutaminyl-[protein] + H2O = L-glutamyl-[protein] + NH4(+). Functionally, probably deamidates glutamine residues to glutamate on methyl-accepting chemotaxis receptors (MCPs), playing an important role in chemotaxis. This is Probable chemoreceptor glutamine deamidase CheD from Burkholderia pseudomallei (strain 1710b).